A 249-amino-acid polypeptide reads, in one-letter code: MDGKKCSVWMFLPLVFTVFTSAGLWIVYFIAVEDDKIFPLNSAERKPGVKHAPYISIAGDEPPASCVFSQVMNMAAFLALVVAVLRFIQLKPKVLNPWLNISGLVALCLASFGMTLLGNFQLTNDEEIHNVGTSLTFGFGTLTCWIQAALTLKVNIKNEGRKVGIPRVILSASITLCVVLYFILMAQGIHMYAARVQWGLVMCFLSYFGTFAVEFRHYRYEIVCSEYQENFLSFSESLSEASEYQTDQV.

The Cytoplasmic portion of the chain corresponds to 1-9 (MDGKKCSVW). A helical membrane pass occupies residues 10 to 30 (MFLPLVFTVFTSAGLWIVYFI). The Extracellular portion of the chain corresponds to 31–64 (AVEDDKIFPLNSAERKPGVKHAPYISIAGDEPPA). A helical transmembrane segment spans residues 65–85 (SCVFSQVMNMAAFLALVVAVL). Residues 86–97 (RFIQLKPKVLNP) are Cytoplasmic-facing. Residues 98 to 118 (WLNISGLVALCLASFGMTLLG) traverse the membrane as a helical segment. Topologically, residues 119–130 (NFQLTNDEEIHN) are extracellular. Residues 131–151 (VGTSLTFGFGTLTCWIQAALT) traverse the membrane as a helical segment. Residues 152–168 (LKVNIKNEGRKVGIPRV) are Cytoplasmic-facing. A helical transmembrane segment spans residues 169–189 (ILSASITLCVVLYFILMAQGI). At 190–192 (HMY) the chain is on the extracellular side. A helical transmembrane segment spans residues 193 to 213 (AARVQWGLVMCFLSYFGTFAV). Topologically, residues 214–249 (EFRHYRYEIVCSEYQENFLSFSESLSEASEYQTDQV) are cytoplasmic.

This sequence belongs to the DRAM/TMEM150 family.

The protein localises to the cell membrane. The protein resides in the lysosome membrane. The enzyme catalyses Ca(2+)(in) = Ca(2+)(out). It catalyses the reaction Na(+)(in) = Na(+)(out). It carries out the reaction K(+)(in) = K(+)(out). The catalysed reaction is Mg(2+)(in) = Mg(2+)(out). Functionally, nonselective cationic channel with high permeability to Ca(2+). Component of a mechanosensitive cation channel. Confers mechanically activated (MA) currents with slow inactivation kinetics. May contribute to proprioception. This chain is Transmembrane protein 150C (TMEM150C), found in Bos taurus (Bovine).